A 67-amino-acid chain; its full sequence is Large ribosomal subunit protein bL35 (67 aa).

The protein belongs to the bacterial ribosomal protein bL35 family.

The sequence is that of Large ribosomal subunit protein bL35 from Paramagnetospirillum magneticum (strain ATCC 700264 / AMB-1) (Magnetospirillum magneticum).